Reading from the N-terminus, the 78-residue chain is Large ribosomal subunit protein uL30 (78 aa).

Residues 58 to 68 (DDTSPDAETGA) show a composition bias toward acidic residues. The segment at 58-78 (DDTSPDAETGADLERDGGNRS) is disordered. A compositionally biased stretch (basic and acidic residues) spans 69–78 (DLERDGGNRS).

Belongs to the universal ribosomal protein uL30 family. Part of the 50S ribosomal subunit.

In Roseiflexus sp. (strain RS-1), this protein is Large ribosomal subunit protein uL30.